Consider the following 228-residue polypeptide: Prolactin-2A1 (228 aa).

A signal peptide spans 1-29 (MQLSITHPCCWTLRLLLVSNLLLWENVAL). 2 disulfides stabilise this stretch: Cys-87–Cys-203 and Cys-220–Cys-228.

The protein belongs to the somatotropin/prolactin family. As to expression, expressed specifically in the placenta. Highly expressed in invasive trophoblast cells lining the central placental vessel.

It is found in the secreted. The sequence is that of Prolactin-2A1 (Prl2a1) from Rattus norvegicus (Rat).